A 1226-amino-acid chain; its full sequence is Methionine synthase (1226 aa).

A Hcy-binding domain is found at lysine 7–valine 327. Zn(2+) is bound by residues cysteine 249, cysteine 312, and cysteine 313. Positions phenylalanine 358–glutamate 619 constitute a Pterin-binding domain. Residues serine 652 to alanine 746 form the B12-binding N-terminal domain. Residues glutamate 696, glycine 758–aspartate 762, histidine 761, serine 806, threonine 810, and alanine 862 each bind methylcob(III)alamin. The region spanning asparagine 748 to glutamate 883 is the B12-binding domain. The 328-residue stretch at lysine 899 to asparagine 1226 folds into the AdoMet activation domain. S-adenosyl-L-methionine contacts are provided by residues aspartate 949, arginine 1137, and tyrosine 1192–phenylalanine 1193.

The protein belongs to the vitamin-B12 dependent methionine synthase family. It depends on methylcob(III)alamin as a cofactor. Requires Zn(2+) as cofactor.

The enzyme catalyses (6S)-5-methyl-5,6,7,8-tetrahydrofolate + L-homocysteine = (6S)-5,6,7,8-tetrahydrofolate + L-methionine. It participates in amino-acid biosynthesis; L-methionine biosynthesis via de novo pathway; L-methionine from L-homocysteine (MetH route): step 1/1. In terms of biological role, catalyzes the transfer of a methyl group from methyl-cobalamin to homocysteine, yielding enzyme-bound cob(I)alamin and methionine. Subsequently, remethylates the cofactor using methyltetrahydrofolate. This Aliivibrio fischeri (Vibrio fischeri) protein is Methionine synthase (metH).